Reading from the N-terminus, the 297-residue chain is HTH-type transcriptional regulator ArgP (297 aa).

One can recognise an HTH lysR-type domain in the interval 4–60; sequence PDYRTLQALDAVIRERGFERAAQKLCITQSAVSQRIKQLENLFGQPLLVRTVPPRPT. Positions 21–40 form a DNA-binding region, H-T-H motif; sequence FERAAQKLCITQSAVSQRIK.

The protein belongs to the LysR transcriptional regulatory family. As to quaternary structure, homodimer.

Controls the transcription of genes involved in arginine and lysine metabolism. This Yersinia enterocolitica serotype O:8 / biotype 1B (strain NCTC 13174 / 8081) protein is HTH-type transcriptional regulator ArgP.